We begin with the raw amino-acid sequence, 247 residues long: Sec-independent protein translocase protein TatC (247 aa).

The next 5 membrane-spanning stretches (helical) occupy residues 21-41, 71-91, 109-129, 154-174, and 195-215; these read IILL…KPLI, AFII…WAFV, ITFL…FPFI, FLLQ…VIML, and FCLL…HLMI.

Belongs to the TatC family. As to quaternary structure, forms a complex with TatA.

It is found in the cell membrane. Its function is as follows. Part of the twin-arginine translocation (Tat) system that transports large folded proteins containing a characteristic twin-arginine motif in their signal peptide across membranes. The polypeptide is Sec-independent protein translocase protein TatC (Listeria innocua serovar 6a (strain ATCC BAA-680 / CLIP 11262)).